We begin with the raw amino-acid sequence, 66 residues long: Myrmicitoxin(1)-Pr5a (66 aa).

The signal sequence occupies residues 1–25 (MRSLYLSFSLTIIFVLVIMHAEAKA). The propeptide occupies 26-37 (ISEPNAIAEADP). Val-65 is modified (valine amide).

Belongs to the formicidae venom clade 3 family. As to expression, expressed by the venom gland.

The protein resides in the secreted. Its function is as follows. Toxin that causes a rapid and irreversible paralysis when intrathoracically injected into insects (blowflies). Does not cause spontaneous nocifensive behaviors by intraplantar injection in mice. Exhibits hemolytic and cytotoxic activities on HEK293 cells. The polypeptide is Myrmicitoxin(1)-Pr5a (Pogonomyrmex rugosus (Desert harvester ant)).